Reading from the N-terminus, the 477-residue chain is V-type ATP synthase beta chain (477 aa).

It belongs to the ATPase alpha/beta chains family.

In terms of biological role, produces ATP from ADP in the presence of a proton gradient across the membrane. The V-type beta chain is a regulatory subunit. The chain is V-type ATP synthase beta chain from Anaeromyxobacter dehalogenans (strain 2CP-1 / ATCC BAA-258).